The sequence spans 180 residues: NADH-quinone oxidoreductase subunit I (180 aa).

4Fe-4S ferredoxin-type domains are found at residues 48–80 and 90–119; these read IVLT…LQKA and EFFR…LTPD. Residues Cys-60, Cys-63, Cys-66, Cys-70, Cys-99, Cys-102, Cys-105, and Cys-109 each coordinate [4Fe-4S] cluster.

Belongs to the complex I 23 kDa subunit family. As to quaternary structure, NDH-1 is composed of 13 different subunits. Subunits NuoA, H, J, K, L, M, N constitute the membrane sector of the complex. It depends on [4Fe-4S] cluster as a cofactor.

It is found in the cell inner membrane. The catalysed reaction is a quinone + NADH + 5 H(+)(in) = a quinol + NAD(+) + 4 H(+)(out). Functionally, NDH-1 shuttles electrons from NADH, via FMN and iron-sulfur (Fe-S) centers, to quinones in the respiratory chain. The immediate electron acceptor for the enzyme in this species is believed to be ubiquinone. Couples the redox reaction to proton translocation (for every two electrons transferred, four hydrogen ions are translocated across the cytoplasmic membrane), and thus conserves the redox energy in a proton gradient. In Sodalis glossinidius (strain morsitans), this protein is NADH-quinone oxidoreductase subunit I.